We begin with the raw amino-acid sequence, 32 residues long: ATP synthase 28 kDa subunit, mitochondrial (32 aa).

It localises to the mitochondrion. The protein localises to the mitochondrion inner membrane. In terms of biological role, mitochondrial membrane ATP synthase (F(1)F(0) ATP synthase or Complex V) produces ATP from ADP in the presence of a proton gradient across the membrane which is generated by electron transport complexes of the respiratory chain. F-type ATPases consist of two structural domains, F(1) - containing the extramembraneous catalytic core and F(0) - containing the membrane proton channel, linked together by a central stalk and a peripheral stalk. During catalysis, ATP synthesis in the catalytic domain of F(1) is coupled via a rotary mechanism of the central stalk subunits to proton translocation. Part of the complex F(0) domain. This is ATP synthase 28 kDa subunit, mitochondrial from Spinacia oleracea (Spinach).